A 318-amino-acid chain; its full sequence is Protein-L-histidine N-pros-methyltransferase (318 aa).

Positions 1–18 are cleaved as a signal peptide; it reads MRLLAGWLCLSLASVWLA. N35 is a glycosylation site (N-linked (GlcNAc...) asparagine). 3 residues coordinate S-adenosyl-L-homocysteine: E174, N210, and Y295.

The protein belongs to the METTL9 family.

It is found in the endoplasmic reticulum. The protein resides in the mitochondrion. It carries out the reaction L-histidyl-[protein] + S-adenosyl-L-methionine = N(pros)-methyl-L-histidyl-[protein] + S-adenosyl-L-homocysteine + H(+). Protein-histidine N-methyltransferase that specifically catalyzes 1-methylhistidine (pros-methylhistidine) methylation of target proteins. Specifically methylates the second His of proteins with a His-x-His (HxH) motif (where 'x' is preferably a small amino acid), while exploiting the first one as a recognition signature. Catalyzes methylation of target proteins such as S100A9, NDUFB3, SLC39A5, SLC39A7, ARMC6 and DNAJB12; 1-methylhistidine modification may affect the binding of zinc and other metals to its target proteins. Constitutes the main methyltransferase for the 1-methylhistidine modification in cell. In Homo sapiens (Human), this protein is Protein-L-histidine N-pros-methyltransferase.